The sequence spans 227 residues: Urease subunit gamma/beta (227 aa).

The tract at residues 1–101 is urease gamma; that stretch reads MRLTPTERDR…LAVVTDPIGG (101 aa). Residues 102-227 form a urease beta region; it reads GLGDQAPGAL…ACGYLGVEQR (126 aa).

In the N-terminal section; belongs to the urease gamma subunit family. This sequence in the C-terminal section; belongs to the urease beta subunit family. Heterohexamer of 3 UreC (alpha) and 3 UreAB (gamma/beta) subunits.

The protein resides in the cytoplasm. The catalysed reaction is urea + 2 H2O + H(+) = hydrogencarbonate + 2 NH4(+). Its pathway is nitrogen metabolism; urea degradation; CO(2) and NH(3) from urea (urease route): step 1/1. The sequence is that of Urease subunit gamma/beta from Streptomyces avermitilis (strain ATCC 31267 / DSM 46492 / JCM 5070 / NBRC 14893 / NCIMB 12804 / NRRL 8165 / MA-4680).